Reading from the N-terminus, the 591-residue chain is Probable lysosomal cobalamin transporter (591 aa).

5 helical membrane passes run 8 to 28 (LIWVAYAVAVAILFLIASTFV), 39 to 59 (AAVTIVCIFTTLALLATVLLI), 95 to 115 (IVYYTLYSLDAVLCLLVIPFT), 144 to 164 (WTLGFLIFVVAIFLVGFFVPF), and 198 to 218 (FLITVGTVLFVLYTGAGMALL). The tract at residues 238–266 (TASQLETNRERQRQLEGRNEGREGGLDSR) is disordered. Over residues 244–266 (TNRERQRQLEGRNEGREGGLDSR) the composition is skewed to basic and acidic residues. 4 helical membrane-spanning segments follow: residues 315–335 (LIGGLILLVFALVIFASMLIT), 378–398 (VLFLLLVLFLFSASVVGIATA), 422–442 (MATVLLTLITLAINYSVAMVV), and 509–529 (FFGIVLFWAQFAFLGVYLIVF).

It belongs to the LIMR family. LMBRD1 subfamily.

Its subcellular location is the lysosome membrane. Probable lysosomal cobalamin transporter. Required to export cobalamin from lysosomes allowing its conversion to cofactors. The sequence is that of Probable lysosomal cobalamin transporter from Pyrenophora tritici-repentis (strain Pt-1C-BFP) (Wheat tan spot fungus).